Consider the following 594-residue polypeptide: UvrABC system protein C (594 aa).

Positions 14 to 91 constitute a GIY-YIG domain; that stretch reads DSPGCYLHKD…IQENMPKYNI (78 aa). One can recognise a UVR domain in the interval 196-231; the sequence is DKIIDDLRSKMLEASHNQEFERAAEYRDLISGIATM.

The protein belongs to the UvrC family. Interacts with UvrB in an incision complex.

The protein localises to the cytoplasm. Its function is as follows. The UvrABC repair system catalyzes the recognition and processing of DNA lesions. UvrC both incises the 5' and 3' sides of the lesion. The N-terminal half is responsible for the 3' incision and the C-terminal half is responsible for the 5' incision. This Streptococcus equi subsp. zooepidemicus (strain H70) protein is UvrABC system protein C.